The primary structure comprises 629 residues: Leucine-rich repeat protein soc-2 homolog (629 aa).

Residues 1–19 (MNLCSSGATASTTSLSSTG) show a composition bias toward low complexity. The interval 1-133 (MNLCSSGATA…PTTKKSKPIQ (133 aa)) is disordered. Residues 21–45 (RNGGTSEGGGEGAGGGGGSGGGGGN) show a composition bias toward gly residues. LRR repeat units follow at residues 149–170 (GIKR…VKEC), 172–193 (HLTE…IGCL), 195–217 (NLRN…QNCK), 218–239 (QLKV…IYRL), 241–262 (TLTT…LRQL), 264–285 (NLTM…IGAL), 287–308 (NLTT…IGNC), 310–331 (NLSA…IGNL), 333–355 (SLVR…KNCK), 356–377 (SMDE…MLAS), 380–401 (GLTT…GPAQ), 404–425 (NVYS…IFSR), 428–449 (GLTK…IGTW), 451–472 (NMVE…IMNL), 474–495 (NLEI…IGNM), 497–518 (KLRI…IGLL), 520–541 (ELQR…IGHL), 543–564 (NLTH…IGSL), 566–588 (GLEN…LALC), and 590–611 (NLKY…IQAG).

It belongs to the SHOC2 family.

Acts as a Ras effector and participates in MAPK pathway activation. Probably acts as a regulatory subunit of protein phosphatase that specifically dephosphorylates Raf kinase and stimulate Raf activity at specialized signaling complexes upon Ras activation. The polypeptide is Leucine-rich repeat protein soc-2 homolog (Sur-8) (Drosophila pseudoobscura pseudoobscura (Fruit fly)).